Consider the following 478-residue polypeptide: Calcium/calmodulin-dependent protein kinase type II subunit alpha (478 aa).

Tyr13 carries the post-translational modification Phosphotyrosine. The Protein kinase domain occupies 13 to 271 (YQLFEELGKG…AAEALKHPWI (259 aa)). Residues 19–27 (LGKGAFSVV) and Lys42 each bind ATP. The active-site Proton acceptor is the Asp135. Ser257 carries the phosphoserine modification. Thr286 carries the post-translational modification Phosphothreonine; by autocatalysis. Residues 290 to 300 (LKKFNARRKLK) form a calmodulin-binding region. Positions 310–320 (TRNFSGGKSGG) are interaction with BAALC. A disordered region spans residues 314–341 (SGGKSGGNKKNDGVKESSESTNTTIEDE). A compositionally biased stretch (basic and acidic residues) spans 322-331 (KKNDGVKESS). A phosphoserine mark is found at Ser330, Ser331, and Ser333. Phosphothreonine is present on residues Thr336 and Thr337. Residue Ser404 is modified to Phosphoserine.

Belongs to the protein kinase superfamily. CAMK Ser/Thr protein kinase family. CaMK subfamily. As to quaternary structure, there are 4 genes encoding calcium/calmodulin-dependent protein kinase type II chains: CAMK2A, CAMK2B, CAMK2G and CAMK2D. The corresponding proteins assemble into homo- or heteromultimeric holoenzymes composed of 12 subunits with two hexameric rings stacked one on top of the other. Interacts with BAALC. Interacts with MPDZ. Interacts with SYN1. Interacts with CAMK2N2. Interacts with SYNGAP1. Interacts with SYNPO2. Interacts with SHANK3. Interacts with GRIN2B. Interacts with CACNB2. Interacts with LRRC7. Interacts with GRM5. Interacts with DAGLA (via C-terminal); this interaction is enhanced by autophosphorylation of CAMK2A at Thr-286. Interacts with CAMK2N1; this interaction requires CAMK2A activation by Ca(2+). Mg(2+) serves as cofactor. In terms of processing, autophosphorylation of Thr-286 following activation by Ca(2+)/calmodulin. Phosphorylation of Thr-286 locks the kinase into an activated state. Post-translationally, palmitoylated. Probably palmitoylated by ZDHHC3 and ZDHHC7. In terms of tissue distribution, expressed in brain. As to expression, expressed in skeletal muscle.

It is found in the cytoplasm. It localises to the synapse. The protein localises to the postsynaptic density. Its subcellular location is the cell projection. The protein resides in the dendritic spine. It is found in the dendrite. It carries out the reaction L-seryl-[protein] + ATP = O-phospho-L-seryl-[protein] + ADP + H(+). It catalyses the reaction L-threonyl-[protein] + ATP = O-phospho-L-threonyl-[protein] + ADP + H(+). With respect to regulation, activated by Ca(2+)/calmodulin. Binding of calmodulin results in conformational change that relieves intrasteric autoinhibition and allows autophosphorylation of Thr-286 which turns the kinase in a constitutively active form and confers to the kinase a Ca(2+)-independent activity. In terms of biological role, calcium/calmodulin-dependent protein kinase that functions autonomously after Ca(2+)/calmodulin-binding and autophosphorylation, and is involved in various processes, such as synaptic plasticity, neurotransmitter release and long-term potentiation. Member of the NMDAR signaling complex in excitatory synapses, it regulates NMDAR-dependent potentiation of the AMPAR and therefore excitatory synaptic transmission. Regulates dendritic spine development. Also regulates the migration of developing neurons. Phosphorylates the transcription factor FOXO3 to activate its transcriptional activity. Phosphorylates the transcription factor ETS1 in response to calcium signaling, thereby decreasing ETS1 affinity for DNA. In response to interferon-gamma (IFN-gamma) stimulation, catalyzes phosphorylation of STAT1, stimulating the JAK-STAT signaling pathway. In response to interferon-beta (IFN-beta) stimulation, stimulates the JAK-STAT signaling pathway. Acts as a negative regulator of 2-arachidonoylglycerol (2-AG)-mediated synaptic signaling via modulation of DAGLA activity. Has no kinase activity. The polypeptide is Calcium/calmodulin-dependent protein kinase type II subunit alpha (Camk2a) (Mus musculus (Mouse)).